The following is a 382-amino-acid chain: tRNA (guanine(37)-N(1))-methyltransferase (382 aa).

Residues His205, 243–244 (DL), 269–270 (DA), and Asn291 contribute to the S-adenosyl-L-methionine site.

It belongs to the class I-like SAM-binding methyltransferase superfamily. TRM5/TYW2 family. In terms of assembly, monomer.

The protein resides in the mitochondrion matrix. It localises to the nucleus. Its subcellular location is the cytoplasm. It catalyses the reaction guanosine(37) in tRNA + S-adenosyl-L-methionine = N(1)-methylguanosine(37) in tRNA + S-adenosyl-L-homocysteine + H(+). In terms of biological role, specifically methylates the N1 position of guanosine-37 in various cytoplasmic and mitochondrial tRNAs. Methylation is not dependent on the nature of the nucleoside 5' of the target nucleoside. This is the first step in the biosynthesis of wybutosine (yW), a modified base adjacent to the anticodon of tRNAs and required for accurate decoding. In Entamoeba histolytica (strain ATCC 30459 / HM-1:IMSS / ABRM), this protein is tRNA (guanine(37)-N(1))-methyltransferase.